The primary structure comprises 95 residues: Aspartyl/glutamyl-tRNA(Asn/Gln) amidotransferase subunit C (95 aa).

Belongs to the GatC family. As to quaternary structure, heterotrimer of A, B and C subunits.

The enzyme catalyses L-glutamyl-tRNA(Gln) + L-glutamine + ATP + H2O = L-glutaminyl-tRNA(Gln) + L-glutamate + ADP + phosphate + H(+). It carries out the reaction L-aspartyl-tRNA(Asn) + L-glutamine + ATP + H2O = L-asparaginyl-tRNA(Asn) + L-glutamate + ADP + phosphate + 2 H(+). Functionally, allows the formation of correctly charged Asn-tRNA(Asn) or Gln-tRNA(Gln) through the transamidation of misacylated Asp-tRNA(Asn) or Glu-tRNA(Gln) in organisms which lack either or both of asparaginyl-tRNA or glutaminyl-tRNA synthetases. The reaction takes place in the presence of glutamine and ATP through an activated phospho-Asp-tRNA(Asn) or phospho-Glu-tRNA(Gln). In Chlorobaculum parvum (strain DSM 263 / NCIMB 8327) (Chlorobium vibrioforme subsp. thiosulfatophilum), this protein is Aspartyl/glutamyl-tRNA(Asn/Gln) amidotransferase subunit C.